A 451-amino-acid polypeptide reads, in one-letter code: uncharacterized protein (451 aa).

Transmembrane regions (helical) follow at residues 11 to 31, 56 to 76, 151 to 171, 175 to 195, and 207 to 227; these read VLLKLIQILFFTISISIYIDL, IQIYYWFVGIILFSIAWSIGT, IIGIQSCLIIFFSTLGFNIYL, FWLIKTIIVDWIISAILLIIF, and VYSVISYIFGSNVLGFGTIKI. A disordered region spans residues 250-300; the sequence is TKSNNNNNNNNNNKQDDNIIYDTDSSFNGQSSSSSSSSSSSSSSSSSATTT. Composition is skewed to low complexity over residues 253-262 and 280-300; these read NNNNNNNNNN and SSSSSSSSSSSSSSSSSATTT. Transmembrane regions (helical) follow at residues 392 to 412 and 413 to 433; these read FVGVIILWVYTISNFIISDYS and LLTIPNILVVVGFSGTILTYL.

Its subcellular location is the membrane. This is an uncharacterized protein from Dictyostelium discoideum (Social amoeba).